We begin with the raw amino-acid sequence, 370 residues long: Fe(2+) transport protein 2 (370 aa).

Positions 1 to 25 (MMMSSSQTPVRIAFVFLVILAATDA) are cleaved as a signal peptide. Over 26-55 (HSDHRTPPPACGGAAVGGECHSVARALRLK) the chain is Extracellular. Residues 56–76 (LIAIPAILAASVAGVCLPLFA) traverse the membrane as a helical segment. Topologically, residues 77–85 (RSVPALRPD) are cytoplasmic. Residues 86-106 (GGLFAVVKAFASGVILGTGYM) traverse the membrane as a helical segment. The Extracellular portion of the chain corresponds to 107 to 130 (HVLPDSFNDLTSPCLPRKPWSEFP). Residues 131-151 (FAAFVAMLAAVFTLMVDSLML) form a helical membrane-spanning segment. Residues 152-215 (TFHTRGSKGR…TTKAQLLRNR (64 aa)) are Cytoplasmic-facing. The helical transmembrane segment at 216–236 (VIVQVLEMGIVVHSVVIGLGM) threads the bilayer. The Extracellular portion of the chain corresponds to 237–247 (GASQNVCTIRP). A helical membrane pass occupies residues 248–268 (LVAALCFHQMFEGMGLGGCIL). At 269–278 (QAGYGGRTRS) the chain is on the cytoplasmic side. A helical membrane pass occupies residues 279–299 (ALVFFFSTTTPFGIALGLALT). The Extracellular portion of the chain corresponds to 300 to 309 (RVYSDSSPTA). The helical transmembrane segment at 310–330 (LVVVGLLNAASAGLLHYMALV) threads the bilayer. Residues 331–349 (ELLAADFMGPKLQGNVRLQ) are Cytoplasmic-facing. Residues 350-370 (LAASLAILLGAGGMSVMAKWA) form a helical membrane-spanning segment.

This sequence belongs to the ZIP transporter (TC 2.A.5) family.

Its subcellular location is the cell membrane. Its function is as follows. Iron transporter that may play a role in the uptake of iron from the rhizosphere across the plasma membrane in the root epidermal layer. This chain is Fe(2+) transport protein 2 (IRT2), found in Oryza sativa subsp. japonica (Rice).